The sequence spans 553 residues: MSDIALTVSILALVAVVGLFIGNVKFRGIGLGIGGVLFGGIIVGHFVSQAGMTLSSDMLHVIQEFGLILFVYTIGIQVGPGFFASLRVSGLRLNLFAVLIVIIGGLVTAILHKLFDIPLPVVMGIFSGAVTNTPALGAGQQILRDLGTPMEMVDQMGMSYAMAYPFGICGILFTMWMLRVIFRVNVETEAQQHESSRTNGGALIKTINIRVENPNLHDLAIKDVPILNGDKIICSRLKREETLKVPSPDTIIQLGDLLHLVGQPADLHNAQLVIGQEVDTSLSTKGTDLRVERVVVTNENVLGKRIRDLHFKERYDVVISRLNRAGVELVASGDISLQFGDILNLVGRPSAIDAVANVLGNAQQKLQQVQMLPVFIGIGLGVLLGSIPVFVPGFPAALKLGLAGGPLIMALILGRIGSIGKLYWFMPPSANLALRELGIVLFLSVVGLKSGGDFVNTLVNGEGLSWIGYGALITAVPLITVGILARMLAKMNYLTMCGMLAGSMTDPPALAFANNLHPTSGAAALSYATVYPLVMFLRIITPQLLAVLFWSIG.

A run of 5 helical transmembrane segments spans residues isoleucine 4–valine 24, glycine 28–serine 48, phenylalanine 65–serine 85, leucine 95–phenylalanine 115, and methionine 158–leucine 178. 2 RCK C-terminal domains span residues glutamine 191–glutamine 276 and aspartate 279–asparagine 361. 6 consecutive transmembrane segments (helical) span residues methionine 371–valine 391, glycine 393–leucine 413, isoleucine 439–valine 459, leucine 464–leucine 484, tyrosine 493–alanine 513, and leucine 533–glycine 553.

It belongs to the AAE transporter (TC 2.A.81) family. YidE subfamily.

It localises to the cell membrane. The protein is Putative transport protein YidE of Shigella boydii serotype 18 (strain CDC 3083-94 / BS512).